The sequence spans 529 residues: Bifunctional purine biosynthesis protein PurH (529 aa).

The MGS-like domain maps to 1 to 148; sequence MQQRRPIRRA…KNHKDVAIVV (148 aa).

It belongs to the PurH family.

It catalyses the reaction (6R)-10-formyltetrahydrofolate + 5-amino-1-(5-phospho-beta-D-ribosyl)imidazole-4-carboxamide = 5-formamido-1-(5-phospho-D-ribosyl)imidazole-4-carboxamide + (6S)-5,6,7,8-tetrahydrofolate. The catalysed reaction is IMP + H2O = 5-formamido-1-(5-phospho-D-ribosyl)imidazole-4-carboxamide. The protein operates within purine metabolism; IMP biosynthesis via de novo pathway; 5-formamido-1-(5-phospho-D-ribosyl)imidazole-4-carboxamide from 5-amino-1-(5-phospho-D-ribosyl)imidazole-4-carboxamide (10-formyl THF route): step 1/1. It participates in purine metabolism; IMP biosynthesis via de novo pathway; IMP from 5-formamido-1-(5-phospho-D-ribosyl)imidazole-4-carboxamide: step 1/1. This Pectobacterium carotovorum subsp. carotovorum (strain PC1) protein is Bifunctional purine biosynthesis protein PurH.